The chain runs to 192 residues: Ornithine lipid N-methyltransferase (192 aa).

This sequence belongs to the methyltransferase superfamily.

The catalysed reaction is an N(2)-[(3R)-3-(2-saturated-acyloxy)acyl]-L-ornithine lipid + 3 S-adenosyl-L-methionine = an N,N,N-trimethylornithine lipid + 3 S-adenosyl-L-homocysteine + 3 H(+). In terms of biological role, catalyzes the 3-fold methylation of ornithine lipids. Forms ornithine lipids that are mono-, di-, and trimethylated on the delta-nitrogen of the ornithine head group. In Singulisphaera acidiphila (strain ATCC BAA-1392 / DSM 18658 / VKM B-2454 / MOB10), this protein is Ornithine lipid N-methyltransferase.